A 380-amino-acid polypeptide reads, in one-letter code: Erythronate-4-phosphate dehydrogenase (380 aa).

S45 and T66 together coordinate substrate. Residues 126–127 (QV), D146, T174, 205–207 (ASR), and D231 contribute to the NAD(+) site. Residue R207 is part of the active site. The active site involves E236. The Proton donor role is filled by H253. G256 is a binding site for NAD(+). A substrate-binding site is contributed by Y257.

This sequence belongs to the D-isomer specific 2-hydroxyacid dehydrogenase family. PdxB subfamily. In terms of assembly, homodimer.

It is found in the cytoplasm. The enzyme catalyses 4-phospho-D-erythronate + NAD(+) = (R)-3-hydroxy-2-oxo-4-phosphooxybutanoate + NADH + H(+). It functions in the pathway cofactor biosynthesis; pyridoxine 5'-phosphate biosynthesis; pyridoxine 5'-phosphate from D-erythrose 4-phosphate: step 2/5. Catalyzes the oxidation of erythronate-4-phosphate to 3-hydroxy-2-oxo-4-phosphonooxybutanoate. The chain is Erythronate-4-phosphate dehydrogenase from Pseudomonas savastanoi pv. phaseolicola (strain 1448A / Race 6) (Pseudomonas syringae pv. phaseolicola (strain 1448A / Race 6)).